The following is an 81-amino-acid chain: MSVKGQMLQDPFLNTLRKEHVPVSIYLVNGIKLQGQVDSFDQYVILLKNTVTQMVYKHAISTIVPGRAVSIPHGPTPTSES.

The Sm domain occupies 10–69 (DPFLNTLRKEHVPVSIYLVNGIKLQGQVDSFDQYVILLKNTVTQMVYKHAISTIVPGRAV).

It belongs to the Hfq family. As to quaternary structure, homohexamer.

Its function is as follows. RNA chaperone that binds small regulatory RNA (sRNAs) and mRNAs to facilitate mRNA translational regulation in response to envelope stress, environmental stress and changes in metabolite concentrations. Also binds with high specificity to tRNAs. The protein is RNA-binding protein Hfq of Methylobacillus flagellatus (strain ATCC 51484 / DSM 6875 / VKM B-1610 / KT).